Consider the following 256-residue polypeptide: Cytoplasmic envelopment protein 1 (256 aa).

It belongs to the herpesviridae cytoplasmic envelopment protein 1 family.

It localises to the virion. The protein localises to the virion tegument. It is found in the host cytoplasm. Its subcellular location is the host Golgi apparatus. Its function is as follows. Plays a critical role in cytoplasmic virus egress. Participates in the final step of tegumentation and envelope acquisition within the host cytoplasm. This Homo sapiens (Human) protein is Cytoplasmic envelopment protein 1 (U75).